The sequence spans 225 residues: Proteoglycan 3 (225 aa).

Residues 1–17 form the signal peptide; that stretch reads MQCLLLLPFLLLGTVSA. The region spanning 107-224 is the C-type lectin domain; the sequence is CKICRYLLVR…CDKQLPFVCS (118 aa). 2 disulfide bridges follow: Cys128-Cys223 and Cys200-Cys215.

As to expression, expressed in bone marrow. Not detected in placenta.

It is found in the cytoplasmic granule. Possesses similar cytotoxic and cytostimulatory activities to PRG2/MBP. In vitro, stimulates neutrophil superoxide production and IL8 release, and histamine and leukotriene C4 release from basophils. The polypeptide is Proteoglycan 3 (Homo sapiens (Human)).